Consider the following 926-residue polypeptide: Thyroid peroxidase (926 aa).

Positions 1–14 are cleaved as a signal peptide; sequence MGARAVLGVTLAVA. Topologically, residues 19–844 are extracellular; it reads FFASILRRKD…TCVDAGRLPR (826 aa). Asparagine 129 is a glycosylation site (N-linked (GlcNAc...) asparagine). Cysteines 142 and 158 form a disulfide. Residue aspartate 238 participates in heme b binding. The active-site Proton acceptor is histidine 239. Aspartate 240 serves as a coordination point for Ca(2+). 2 disulfides stabilise this stretch: cysteine 259/cysteine 269 and cysteine 263/cysteine 286. N-linked (GlcNAc...) asparagine glycosylation is found at asparagine 277 and asparagine 307. Ca(2+)-binding residues include threonine 321, phenylalanine 323, aspartate 325, and serine 327. N-linked (GlcNAc...) asparagine glycosylation occurs at asparagine 342. Heme b is bound by residues glutamate 398 and histidine 493. 7 disulfides stabilise this stretch: cysteine 596–cysteine 653, cysteine 694–cysteine 719, cysteine 740–cysteine 780, cysteine 766–cysteine 792, cysteine 798–cysteine 812, cysteine 806–cysteine 821, and cysteine 823–cysteine 836. The Sushi domain maps to 738–793; it reads DACGFPDPVEDGGFLLCEERGQRVLVFSCRHGFRLRGPAQITCTPRGWDSPPPLCK. An EGF-like; calcium-binding domain is found at 794–837; the sequence is DINECEDETDPPCHASARCKNTKGGVLCECSDPLVLGEDGRTCV. A helical transmembrane segment spans residues 845 to 869; the sequence is ASVVSIALGAVLVCGLAGLAWTVVC. Over 870–926 the chain is Cytoplasmic; sequence RWTHADARPLLPVGEGEGDGKSPSLPLPGCGNRRDVGAAPALEVEQDLSCGSRGLCE.

It belongs to the peroxidase family. XPO subfamily. As to quaternary structure, interacts with DUOX1, DUOX2 and CYBA. It depends on Ca(2+) as a cofactor. The cofactor is heme b. Heme is covalently bound through a H(2)O(2)-dependent autocatalytic process. Heme insertion is important for the delivery of protein at the cell surface. In terms of processing, cleaved in its N-terminal part. Post-translationally, N-glycosylated; contains mannose and N-acetylglucosamine.

It localises to the membrane. It carries out the reaction 2 iodide + H2O2 + 2 H(+) = diiodine + 2 H2O. The enzyme catalyses [thyroglobulin]-L-tyrosine + iodide + H2O2 + H(+) = [thyroglobulin]-3-iodo-L-tyrosine + 2 H2O. The catalysed reaction is [thyroglobulin]-3-iodo-L-tyrosine + iodide + H2O2 + H(+) = [thyroglobulin]-3,5-diiodo-L-tyrosine + 2 H2O. It catalyses the reaction 2 [thyroglobulin]-3,5-diiodo-L-tyrosine + H2O2 = [thyroglobulin]-L-thyroxine + [thyroglobulin]-dehydroalanine + 2 H2O. It carries out the reaction [thyroglobulin]-3-iodo-L-tyrosine + [thyroglobulin]-3,5-diiodo-L-tyrosine + H2O2 = [thyroglobulin]-3,3',5-triiodo-L-thyronine + [thyroglobulin]-dehydroalanine + 2 H2O. It functions in the pathway hormone biosynthesis; thyroid hormone biosynthesis. Its function is as follows. Iodination and coupling of the hormonogenic tyrosines in thyroglobulin to yield the thyroid hormones T(3) and T(4). The chain is Thyroid peroxidase (TPO) from Sus scrofa (Pig).